Reading from the N-terminus, the 130-residue chain is Small ribosomal subunit protein uS9 (130 aa).

Belongs to the universal ribosomal protein uS9 family.

The sequence is that of Small ribosomal subunit protein uS9 from Halorhodospira halophila (strain DSM 244 / SL1) (Ectothiorhodospira halophila (strain DSM 244 / SL1)).